A 1451-amino-acid chain; its full sequence is Murinoglobulin-2 (1451 aa).

A signal peptide spans 1-27 (MWKSRRAQLCLFSVLLAFLPSASSLNG). Disulfide bonds link C48–C86, C251–C276, and C269–C288. A glycan (N-linked (GlcNAc...) asparagine) is linked at N55. N294, N313, and N500 each carry an N-linked (GlcNAc...) asparagine glycan. 3 disulfides stabilise this stretch: C461–C555, C587–C773, and C634–C680. The tract at residues 677–734 (PKICFDSAPMSGPRGKFDLAFSSEVSGTLQKGSSKRPQPEEPPREDPPPKDPLAETIR) is bait region. The disordered stretch occupies residues 703–728 (GTLQKGSSKRPQPEEPPREDPPPKDP). Positions 713-728 (PQPEEPPREDPPPKDP) are enriched in basic and acidic residues. N-linked (GlcNAc...) asparagine glycosylation is found at N749, N776, and N871. Cystine bridges form between C849–C885, C923–C1274, C1081–C1104, and C1298–C1444. Residues 974 to 977 (CGEQ) constitute a cross-link (isoglutamyl cysteine thioester (Cys-Gln)). The N-linked (GlcNAc...) asparagine glycan is linked to N1401.

It belongs to the protease inhibitor I39 (alpha-2-macroglobulin) family. As to quaternary structure, monomer. In terms of tissue distribution, plasma.

The protein resides in the secreted. In terms of biological role, a proteinase activates the inhibitor by specific proteolysis in the bait region, which, by an unknown mechanism leads to reaction at the cysteinyl-glutamyl internal thiol ester site and to a conformational change, whereby the proteinase is trapped and/or covalently bound to the inhibitor. While in the tetrameric proteinase inhibitors steric inhibition is sufficiently strong, monomeric forms need a covalent linkage between the activated glutamyl residue of the original thiol ester and a terminal amino group of a lysine or another nucleophilic group on the proteinase, for inhibition to be effective. The chain is Murinoglobulin-2 (Mug2) from Mus musculus (Mouse).